A 1927-amino-acid chain; its full sequence is Lactase/phlorizin hydrolase (1927 aa).

The N-terminal stretch at 1-19 is a signal peptide; the sequence is MELSWHVVFIALLSFSCWG. The propeptide at 20-868 is XBetaGly; the sequence is SDWESDRNFI…NTVNLPSKVR (849 aa). Over 20-1882 the chain is Extracellular; sequence SDWESDRNFI…LMLGTTEAQT (1863 aa). N-linked (GlcNAc...) asparagine glycosylation occurs at Asn42. The interval 44–286 is glycosyl hydrolase-1 1; Region I; that stretch reads SGLLGDQSSN…FIFNLKLPDC (243 aa). The interval 362 to 855 is glycosyl hydrolase-1 2; Region II; sequence IWEAFANQSR…GFLTKGAKRL (494 aa). Asn368, Asn418, Asn512, Asn821, Asn934, Asn946, and Asn989 each carry an N-linked (GlcNAc...) asparagine glycan. The tract at residues 902–1366 is glycosyl hydrolase-1 3; Region III. Phlorizin hydrolase/glycosylceramidase activity; sequence TFRDDFLWGV…EVITNNGMPL (465 aa). The active-site Proton donor; for phlorizin hydrolase/Glycosylceramidase activity is the Glu1065. Asn1174 is a glycosylation site (N-linked (GlcNAc...) asparagine). The tract at residues 1220–1244 is disordered; sequence RLNPPSYEDDQEMAEEEDPSWPSTA. Over residues 1226-1238 the composition is skewed to acidic residues; sequence YEDDQEMAEEEDP. The active-site Nucleophile; for phlorizin hydrolase/Glycosylceramidase activity is Glu1273. Asn1340 and Asn1508 each carry an N-linked (GlcNAc...) asparagine glycan. The tract at residues 1373-1846 is glycosyl hydrolase-1 4; Region IV. Lactase activity; that stretch reads LYGRFPEGFI…CNGFPDPATG (474 aa). The Proton donor; for lactase activity role is filled by Glu1538. Residues 1647–1927 are required for homodimerization and transport to the plasma membrane; the sequence is RDRSLAAGLN…QQELSPVSSF (281 aa). N-linked (GlcNAc...) asparagine glycosylation is found at Asn1656 and Asn1672. Glu1749 functions as the Nucleophile; for lactase activity in the catalytic mechanism. Asn1761 and Asn1814 each carry an N-linked (GlcNAc...) asparagine glycan. The chain crosses the membrane as a helical span at residues 1883–1901; it reads ALYVLFSLVLLGVCGLAFL. The Cytoplasmic segment spans residues 1902 to 1927; that stretch reads SYKYCKRSKQGKTQRSQQELSPVSSF.

Belongs to the glycosyl hydrolase 1 family. Homodimer. In terms of processing, N-glycosylated. In terms of tissue distribution, specifically expressed in small intestine.

It localises to the apical cell membrane. The enzyme catalyses lactose + H2O = beta-D-galactose + D-glucose. The catalysed reaction is phlorizin + H2O = phloretin + beta-D-glucose. It carries out the reaction D-cellobiose + H2O = beta-D-glucose + D-glucose. It catalyses the reaction quercetin 4'-O-beta-D-glucoside + H2O = quercetin + beta-D-glucose. The enzyme catalyses quercetin 3-O-beta-D-glucoside + H2O = quercetin + beta-D-glucose. The catalysed reaction is kaempferol 3-O-beta-D-glucoside + H2O = kaempferol + beta-D-glucose. It carries out the reaction luteolin 7-O-beta-D-glucoside + H2O = luteolin + beta-D-glucose. It catalyses the reaction luteolin 4'-O-beta-D-glucoside + H2O = luteolin + beta-D-glucose. The enzyme catalyses (2S)-naringenin 7-O-beta-D-glucoside + H2O = (2S)-naringenin + beta-D-glucose. The catalysed reaction is eriodictyol-7-O-beta-D-glucoside + H2O = (S)-eriodictyol + beta-D-glucose. It carries out the reaction apigenin 7-O-beta-D-glucoside + H2O = apigenin + beta-D-glucose. It catalyses the reaction daidzein 7-O-beta-D-glucoside + H2O = daidzein + beta-D-glucose + H(+). The enzyme catalyses genistein 7-O-beta-D-glucoside + H2O = genistein + beta-D-glucose. The catalysed reaction is a beta-D-galactosyl-N-acylsphingosine + H2O = a ceramide + beta-D-galactose.. It carries out the reaction beta-D-glucosyl-(1&lt;-&gt;1')-N-hexadecanoylsphing-4-enine + H2O = N-hexadecanoylsphing-4-enine + beta-D-glucose. It catalyses the reaction beta-D-galactosyl-(1&lt;-&gt;1')-N-hexadecanoylsphing-4-enine + H2O = beta-D-galactose + N-hexadecanoylsphing-4-enine. The enzyme catalyses beta-D-galactosyl-(1&lt;-&gt;1')-N-hexadecanoylsphinganine + H2O = N-hexadecanoylsphinganine + beta-D-galactose. The catalysed reaction is beta-D-glucosyl-(1&lt;-&gt;1')-N-hexadecanoylsphinganine + H2O = N-hexadecanoylsphinganine + beta-D-glucose. Its function is as follows. Broad specificity glycosidase of the intestinal brush border membrane that hydrolyzes lactose, the main sugar in mammalian milk, to produce D-glucose and D-galactose. The mature protein is composed of two domains that catalyze the hydrolysis of beta-glucopyranosides and beta-galactopyranosides, with a preference for hydrophilic aglycones (in lactose and cellobiose) for one domain and hydrophobic aglycones (in phlorizin and glycosylceramides) for the other. The polypeptide is Lactase/phlorizin hydrolase (Homo sapiens (Human)).